Here is a 682-residue protein sequence, read N- to C-terminus: Methionine--tRNA ligase (682 aa).

The short motif at 15–25 (PYANGAIHLGH) is the 'HIGH' region element. Zn(2+) is bound by residues C146, C149, C159, and C162. The 'KMSKS' region signature appears at 331–335 (KMSKS). An ATP-binding site is contributed by K334. One can recognise a tRNA-binding domain in the interval 580–682 (DLAKLDMRVA…NGVTAGMQVK (103 aa)).

It belongs to the class-I aminoacyl-tRNA synthetase family. MetG type 1 subfamily. As to quaternary structure, homodimer. The cofactor is Zn(2+).

Its subcellular location is the cytoplasm. The enzyme catalyses tRNA(Met) + L-methionine + ATP = L-methionyl-tRNA(Met) + AMP + diphosphate. In terms of biological role, is required not only for elongation of protein synthesis but also for the initiation of all mRNA translation through initiator tRNA(fMet) aminoacylation. This Haemophilus influenzae (strain 86-028NP) protein is Methionine--tRNA ligase.